The sequence spans 760 residues: Cellulose synthase-like protein G1 (760 aa).

Transmembrane regions (helical) follow at residues 28 to 48 and 54 to 74; these read IYAI…VHSL and TLIT…WATT. Active-site residues include aspartate 142 and aspartate 447. Helical transmembrane passes span 530–550, 558–578, 593–613, 656–676, and 680–700; these read IPLT…VSVF, FWLY…DFLL, LMIK…LKTL, VAIV…FCGG, and LELM…GAMV.

The protein belongs to the glycosyltransferase 2 family. Plant cellulose synthase-like G subfamily. In terms of tissue distribution, expressed in young seedlings, primarily in the vascular tissue.

The protein localises to the golgi apparatus membrane. In terms of biological role, thought to be a Golgi-localized beta-glycan synthase that polymerize the backbones of noncellulosic polysaccharides (hemicelluloses) of plant cell wall. This chain is Cellulose synthase-like protein G1 (CSLG1), found in Arabidopsis thaliana (Mouse-ear cress).